Here is a 431-residue protein sequence, read N- to C-terminus: Polyprenol-phosphate-mannose-dependent alpha-(1-2)-phosphatidylinositol pentamannoside mannosyltransferase (431 aa).

10 helical membrane-spanning segments follow: residues alanine 43–proline 63, phenylalanine 108–tryptophan 128, glycine 148–isoleucine 168, phenylalanine 175–proline 195, leucine 202–valine 222, alanine 229–glycine 249, glycine 290–tryptophan 310, leucine 332–isoleucine 352, isoleucine 364–alanine 384, and leucine 397–alanine 417.

It belongs to the glycosyltransferase 87 family.

Its subcellular location is the cell membrane. The protein operates within phospholipid metabolism; phosphatidylinositol metabolism. Functionally, catalyzes the alpha-1,2 addition of a mannose residue from polyprenol-phosphate-mannose (PPM) to a monoacyl phosphatidylinositol tetramannoside (AcPIM4) to generate a monoacyl phosphatidylinositol pentamannoside (AcPIM5). The chain is Polyprenol-phosphate-mannose-dependent alpha-(1-2)-phosphatidylinositol pentamannoside mannosyltransferase (pimE) from Mycobacterium tuberculosis (strain CDC 1551 / Oshkosh).